Reading from the N-terminus, the 345-residue chain is MSEETSIPGIIASTPPISKDSRRNVSHWLQALAVFLHSVSLTLTASWYTVLWAFLPFWPFLIVYLIWLIYDDGFVTGKDRQKRWLRNAPPYRWFCHYFPIRLHKTTELDSEKNYIFGYHPHGIISLGAFGGFASEGADFSKLFPGINVSVLTLNSNFYVPVYRDYLMALNINSVSKKSCVSILSRKPGDSVLIVIGGAQESLLSRPGQNNLVLKKRFGFVKLAFLTGSSLVPCFAFGESDIFEQVDNNPRTRIYKFQEIVKKIAGFTVPFFYGRGLLNKTFGLMPWRKPINIVVGEPIDVPKKSHPTNQEIYEVHEEYIRRLEGLWNKYKDVFLPNRISELKLSA.

Topologically, residues 1 to 49 are cytoplasmic; that stretch reads MSEETSIPGIIASTPPISKDSRRNVSHWLQALAVFLHSVSLTLTASWYT. A helical transmembrane segment spans residues 50–70; sequence VLWAFLPFWPFLIVYLIWLIY. Residues 71–113 lie on the Lumenal side of the membrane; it reads DDGFVTGKDRQKRWLRNAPPYRWFCHYFPIRLHKTTELDSEKN. Residues 114–134 traverse the membrane as a helical segment; sequence YIFGYHPHGIISLGAFGGFAS. Over 135–141 the chain is Cytoplasmic; that stretch reads EGADFSK. The helical transmembrane segment at 142–162 threads the bilayer; that stretch reads LFPGINVSVLTLNSNFYVPVY. The Lumenal portion of the chain corresponds to 163-216; the sequence is RDYLMALNINSVSKKSCVSILSRKPGDSVLIVIGGAQESLLSRPGQNNLVLKKR. The chain crosses the membrane as a helical span at residues 217–237; the sequence is FGFVKLAFLTGSSLVPCFAFG. The Cytoplasmic segment spans residues 238-345; sequence ESDIFEQVDN…NRISELKLSA (108 aa).

Belongs to the diacylglycerol acyltransferase family.

It localises to the lipid droplet. It is found in the endoplasmic reticulum membrane. It catalyses the reaction an acyl-CoA + a 1,2-diacyl-sn-glycerol = a triacyl-sn-glycerol + CoA. It carries out the reaction a 2-acylglycerol + an acyl-CoA = a 1,2-diacyl-sn-glycerol + CoA. The protein operates within glycerolipid metabolism; triacylglycerol biosynthesis. Catalyzes the terminal and only committed step in triacylglycerol (TAG) synthesis by using diacylglycerol (DAG) and fatty acyl-CoA as substrates. Required for storage lipid synthesis. Major DAG esterifying enzyme in stationary phase when TAG production is particularly active. Involved in lipid particle synthesis from the endoplasmic reticulum, promoting localized TAG production at discrete ER subdomains. This chain is Diacylglycerol O-acyltransferase 1 (dga1), found in Schizosaccharomyces pombe (strain 972 / ATCC 24843) (Fission yeast).